A 405-amino-acid polypeptide reads, in one-letter code: L-carnitine CoA-transferase (405 aa).

Residues K97 and R104 each coordinate CoA. Residue D169 is the Nucleophile of the active site.

This sequence belongs to the CoA-transferase III family. CaiB subfamily. Homodimer.

It localises to the cytoplasm. The enzyme catalyses crotonobetainyl-CoA + (R)-carnitine = crotonobetaine + (R)-carnitinyl-CoA. The catalysed reaction is 4-(trimethylamino)butanoyl-CoA + (R)-carnitine = (R)-carnitinyl-CoA + 4-(trimethylamino)butanoate. Its pathway is amine and polyamine metabolism; carnitine metabolism. Functionally, catalyzes the reversible transfer of the CoA moiety from gamma-butyrobetainyl-CoA to L-carnitine to generate L-carnitinyl-CoA and gamma-butyrobetaine. Is also able to catalyze the reversible transfer of the CoA moiety from gamma-butyrobetainyl-CoA or L-carnitinyl-CoA to crotonobetaine to generate crotonobetainyl-CoA. This is L-carnitine CoA-transferase from Escherichia coli (strain K12 / MC4100 / BW2952).